A 260-amino-acid chain; its full sequence is 3'-5' ssDNA/RNA exonuclease TatD (260 aa).

A divalent metal cation-binding residues include glutamate 92, histidine 128, and histidine 153.

The protein belongs to the metallo-dependent hydrolases superfamily. TatD-type hydrolase family. TatD subfamily. As to quaternary structure, monomer. Mg(2+) serves as cofactor.

It localises to the cytoplasm. In terms of biological role, 3'-5' exonuclease that prefers single-stranded DNA and RNA. May play a role in the H(2)O(2)-induced DNA damage repair. This is 3'-5' ssDNA/RNA exonuclease TatD from Yersinia pseudotuberculosis serotype O:3 (strain YPIII).